The sequence spans 674 residues: Probable L-type lectin-domain containing receptor kinase II.1 (674 aa).

Residues 1 to 24 form the signal peptide; that stretch reads MAGVLGSVVFWLIIGIHVTFLVFA. The Extracellular portion of the chain corresponds to 25 to 301; that stretch reads QEGDHFVYYD…PSPKRFPLKE (277 aa). The segment at 28–274 is legume-lectin like; the sequence is DHFVYYDFRN…NQYILGWSFK (247 aa). Residues asparagine 57, asparagine 117, asparagine 133, asparagine 185, asparagine 210, and asparagine 242 are each glycosylated (N-linked (GlcNAc...) asparagine). The chain crosses the membrane as a helical span at residues 302–322; it reads VLGATISTIAFLTLGGIVYLY. Residues 323–674 lie on the Cytoplasmic side of the membrane; that stretch reads KKKKYAEVLE…EDVTVLFGGR (352 aa). Residues 355-633 form the Protein kinase domain; it reads FRENQLLGAG…LEGNVSVPAI (279 aa). ATP-binding positions include 361-369 and lysine 383; that span reads LGAGGFGKV. Aspartate 480 (proton acceptor) is an active-site residue.

In the C-terminal section; belongs to the protein kinase superfamily. Ser/Thr protein kinase family. It in the N-terminal section; belongs to the leguminous lectin family.

It localises to the cell membrane. The catalysed reaction is L-seryl-[protein] + ATP = O-phospho-L-seryl-[protein] + ADP + H(+). It carries out the reaction L-threonyl-[protein] + ATP = O-phospho-L-threonyl-[protein] + ADP + H(+). This is Probable L-type lectin-domain containing receptor kinase II.1 (LECRK21) from Arabidopsis thaliana (Mouse-ear cress).